A 422-amino-acid chain; its full sequence is UDP-N-acetylglucosamine 1-carboxyvinyltransferase (422 aa).

Residue 22 to 23 (KN) participates in phosphoenolpyruvate binding. Arg-94 is a UDP-N-acetyl-alpha-D-glucosamine binding site. The active-site Proton donor is Cys-118. Residue Cys-118 is modified to 2-(S-cysteinyl)pyruvic acid O-phosphothioketal. UDP-N-acetyl-alpha-D-glucosamine is bound by residues 123-127 (RPVDL), Asp-309, and Ile-331.

The protein belongs to the EPSP synthase family. MurA subfamily.

It localises to the cytoplasm. It carries out the reaction phosphoenolpyruvate + UDP-N-acetyl-alpha-D-glucosamine = UDP-N-acetyl-3-O-(1-carboxyvinyl)-alpha-D-glucosamine + phosphate. It functions in the pathway cell wall biogenesis; peptidoglycan biosynthesis. Its function is as follows. Cell wall formation. Adds enolpyruvyl to UDP-N-acetylglucosamine. The sequence is that of UDP-N-acetylglucosamine 1-carboxyvinyltransferase from Cereibacter sphaeroides (strain ATCC 17025 / ATH 2.4.3) (Rhodobacter sphaeroides).